We begin with the raw amino-acid sequence, 157 residues long: Cytochrome P450 monooxygenase atG (157 aa).

C97 is a heme binding site.

The protein belongs to the cytochrome P450 family. Heme serves as cofactor.

The protein operates within secondary metabolite biosynthesis. Cytochrome P450 monooxygenase; part of the gene cluster that mediates the biosynthesis of terreic acid, a quinone epoxide inhibitor of Bruton's tyrosine kinase (BTK). The first step of the pathway is the synthesis of 6-methylsalicylic acid (6-MSA) by the 6-methylsalicylic acid synthase atX. In the biosynthesis of 6-MSA, atX utilizes one acetyl-CoA and three malonyl-CoAs as its substrates and catalyzes a series of programmed reactions including Claisen condensation, reduction, aldol cyclization, and the hydrolytic cleavage that yields 6-MSA. The 6-methylsalicylate 1-monooxygenase atA then catalyzes the decarboxylative hydroxylation of 6-MSA to 3-methylcatechol. The next step is the conversion of 3-methylcatechol to 3-methyl-1,2,4-benzenetriol by cytochrome P450 monooxygenase atE, which is enhanced by cytochrome P450 monooxygenase atG. Then, the epoxidase atD catalyzes the epoxidation and hydroxyl oxidation of 3-methyl-1,2,4-benzenetriol to terremutin. Lastly, GMC oxidoreductase atC oxidizes terremutin to terreic acid. The chain is Cytochrome P450 monooxygenase atG from Aspergillus terreus (strain NIH 2624 / FGSC A1156).